The primary structure comprises 242 residues: Transcriptional regulatory protein GltR (242 aa).

One can recognise a Response regulatory domain in the interval 7-123; sequence SILLVDDDQE…ELLARIKALL (117 aa). D56 carries the post-translational modification 4-aspartylphosphate. The ompR/PhoB-type DNA-binding region spans 134–234; the sequence is GDVLAFEDWR…VRGSGYLLAA (101 aa).

In terms of processing, phosphorylated by GtrS.

The protein localises to the cytoplasm. Phosphorylation of GltR induces its dissociation from DNA leading to transcriptional activation. Member of the two-component regulatory system GtrS/GltR involved in the regulation of glucose metabolism and transport, as well as regulation of the exotoxin A gene expression. GltR controls the transcription of genes involved in glucose metabolism (glk and edd/gap-1) and transport (oprB) as well as the expression of toxA that encodes exotoxin A, the primary virulence factor. Acts as a repressor that is released from its target operators upon phosphorylation. Its function is as follows. Contributes to modulation of the type III secretion system (T3SS) in response to host cells via the regulation of the OprB transport system. In Pseudomonas aeruginosa (strain ATCC 15692 / DSM 22644 / CIP 104116 / JCM 14847 / LMG 12228 / 1C / PRS 101 / PAO1), this protein is Transcriptional regulatory protein GltR.